Consider the following 148-residue polypeptide: Deoxyuridine 5'-triphosphate nucleotidohydrolase (148 aa).

Substrate is bound by residues 65-67 (RSG), asparagine 78, 82-84 (TID), and lysine 92.

The protein belongs to the dUTPase family. The cofactor is Mg(2+).

The catalysed reaction is dUTP + H2O = dUMP + diphosphate + H(+). The protein operates within pyrimidine metabolism; dUMP biosynthesis; dUMP from dCTP (dUTP route): step 2/2. In terms of biological role, this enzyme is involved in nucleotide metabolism: it produces dUMP, the immediate precursor of thymidine nucleotides and it decreases the intracellular concentration of dUTP so that uracil cannot be incorporated into DNA. The sequence is that of Deoxyuridine 5'-triphosphate nucleotidohydrolase from Chlorobium phaeovibrioides (strain DSM 265 / 1930) (Prosthecochloris vibrioformis (strain DSM 265)).